A 95-amino-acid polypeptide reads, in one-letter code: uncharacterized protein (95 aa).

One can recognise an ABM domain in the interval 2–92 (VREAAMLHIK…YTPFPTVEHF (91 aa)).

This is an uncharacterized protein from Bacillus subtilis (strain 168).